A 259-amino-acid chain; its full sequence is Virulence plasmid ParA family protein pGP5-D (259 aa).

ATP is bound at residue 9–16 (FKGGTGKT).

This sequence belongs to the ParA family.

The polypeptide is Virulence plasmid ParA family protein pGP5-D (Chlamydia psittaci (Chlamydophila psittaci)).